We begin with the raw amino-acid sequence, 475 residues long: PRAME family member 20 (475 aa).

The LRR 1; degenerate repeat unit spans residues 97–124; that stretch reads RWKLQVLDLQDVSENFWMVWSEAMARRC. The LRR 2; degenerate repeat unit spans residues 179–203; that stretch reads HLCCKKLKMLGMLFHNIRNILKTVN. The stretch at 204–230 is one LRR 3; degenerate repeat; sequence LDCIQEVEVNCNWTLPVLAEFTPYLGQ. One copy of the LRR 4; degenerate repeat lies at 231-265; it reads MRNLRKLVLSDIDSRYISPEQKKEFVTQFTTQFLK. LRR repeat units lie at residues 266–291, 292–323, 324–342, 348–375, and 376–400; these read LRCL…LSCL, KTSL…GQLK, TLDL…PLQV, AATL…ALSR, and CFEL…LLCH.

It belongs to the PRAME family.

This chain is PRAME family member 20, found in Homo sapiens (Human).